The following is a 21-amino-acid chain: Large ribosomal subunit protein uL30 (21 aa).

Positions 1 to 15 (AKTENKTVTVRQTAS) are enriched in polar residues. The disordered stretch occupies residues 1 to 21 (AKTENKTVTVRQTASPIXXXK).

The protein belongs to the universal ribosomal protein uL30 family. Part of the 50S ribosomal subunit.

The chain is Large ribosomal subunit protein uL30 (rpmD) from Brevundimonas diminuta (Pseudomonas diminuta).